The primary structure comprises 788 residues: Endonuclease MutS2 (788 aa).

ATP is bound at residue 332 to 339 (GPNTGGKT). The region spanning 713–788 (VDLRGMDAEE…GTGVTVVELK (76 aa)) is the Smr domain.

It belongs to the DNA mismatch repair MutS family. MutS2 subfamily. Homodimer. Binds to stalled ribosomes, contacting rRNA.

In terms of biological role, endonuclease that is involved in the suppression of homologous recombination and thus may have a key role in the control of bacterial genetic diversity. Functionally, acts as a ribosome collision sensor, splitting the ribosome into its 2 subunits. Detects stalled/collided 70S ribosomes which it binds and splits by an ATP-hydrolysis driven conformational change. Acts upstream of the ribosome quality control system (RQC), a ribosome-associated complex that mediates the extraction of incompletely synthesized nascent chains from stalled ribosomes and their subsequent degradation. Probably generates substrates for RQC. The chain is Endonuclease MutS2 from Clostridium botulinum (strain Kyoto / Type A2).